We begin with the raw amino-acid sequence, 206 residues long: Small ribosomal subunit protein uS4 (206 aa).

The S4 RNA-binding domain maps to 96-156 (SRLDNIVYRL…KKSKNQLRIK (61 aa)).

This sequence belongs to the universal ribosomal protein uS4 family. As to quaternary structure, part of the 30S ribosomal subunit. Contacts protein S5. The interaction surface between S4 and S5 is involved in control of translational fidelity.

Functionally, one of the primary rRNA binding proteins, it binds directly to 16S rRNA where it nucleates assembly of the body of the 30S subunit. Its function is as follows. With S5 and S12 plays an important role in translational accuracy. The sequence is that of Small ribosomal subunit protein uS4 from Buchnera aphidicola subsp. Cinara cedri (strain Cc).